Here is a 442-residue protein sequence, read N- to C-terminus: 5-methylthioadenosine/S-adenosylhomocysteine deaminase (442 aa).

Zn(2+) is bound by residues His70 and His72. 2 residues coordinate substrate: Glu99 and His191. Residue His218 participates in Zn(2+) binding. Substrate-binding residues include Glu221 and Asp306. Position 306 (Asp306) interacts with Zn(2+).

The protein belongs to the metallo-dependent hydrolases superfamily. MTA/SAH deaminase family. It depends on Zn(2+) as a cofactor.

It carries out the reaction S-adenosyl-L-homocysteine + H2O + H(+) = S-inosyl-L-homocysteine + NH4(+). The enzyme catalyses S-methyl-5'-thioadenosine + H2O + H(+) = S-methyl-5'-thioinosine + NH4(+). In terms of biological role, catalyzes the deamination of 5-methylthioadenosine and S-adenosyl-L-homocysteine into 5-methylthioinosine and S-inosyl-L-homocysteine, respectively. Is also able to deaminate adenosine. This is 5-methylthioadenosine/S-adenosylhomocysteine deaminase from Nitratidesulfovibrio vulgaris (strain DP4) (Desulfovibrio vulgaris).